Here is an 806-residue protein sequence, read N- to C-terminus: Disintegrin and metalloproteinase domain-containing protein 1b (806 aa).

The N-terminal stretch at M1–C33 is a signal peptide. The interval C169–K188 is disordered. The Peptidase M12B domain maps to K203 to P397. N-linked (GlcNAc...) asparagine glycosylation is present at N224. 7 disulfides stabilise this stretch: C313-C392, C353-C376, C355-C361, C462-C482, C635-C647, C641-C653, and C655-C664. Zn(2+) is bound at residue H338. Residue E339 is part of the active site. Zn(2+) contacts are provided by H342 and H348. 2 N-linked (GlcNAc...) asparagine glycosylation sites follow: N375 and N476. Residues A406–D490 form the Disintegrin domain. Residues F631–K665 form the EGF-like domain. Residues G668 to S694 form a disordered region. N680, N683, and N690 each carry an N-linked (GlcNAc...) asparagine glycan. Positions N680 to S694 are enriched in polar residues. The chain crosses the membrane as a helical span at residues L705–S725. Residues A726–E806 lie on the Cytoplasmic side of the membrane. Residues E735–E806 form a disordered region. The span at E740–E806 shows a compositional bias: acidic residues.

As to quaternary structure, heterodimer with ADAM2/fertilin subunit beta. Testis.

It is found in the membrane. May play a role in spermatogenesis and sperm maturation. The chain is Disintegrin and metalloproteinase domain-containing protein 1b (Adam1b) from Mus musculus (Mouse).